We begin with the raw amino-acid sequence, 402 residues long: Transcription regulatory protein OpdE (402 aa).

The next 12 membrane-spanning stretches (helical) occupy residues 22–42, 60–80, 86–106, 108–128, 147–167, 170–190, 220–240, 256–276, 296–316, 318–338, 348–368, and 375–395; these read VLAI…PVSL, GIAI…SVAG, TLLL…ALAP, YFVY…FWSM, ALVN…GAWL, LIGW…ALAW, PGVM…FSLF, AHVS…TLLI, ALIA…VVLL, LWGL…ARVF, LFVA…GLLF, and ATFF…ILTA.

It to B.subtilis YwfA.

It localises to the cell membrane. In terms of biological role, regulates the expression of oprD which encodes the imipenem-specific porin. In Pseudomonas aeruginosa (strain ATCC 15692 / DSM 22644 / CIP 104116 / JCM 14847 / LMG 12228 / 1C / PRS 101 / PAO1), this protein is Transcription regulatory protein OpdE (opdE).